Here is a 542-residue protein sequence, read N- to C-terminus: Sensor protein CitS (542 aa).

Topologically, residues 1–13 (MVKKRFHFSLQTK) are cytoplasmic. The helical transmembrane segment at 14–34 (IMGLIAALLVFVIGVLTITLA) threads the bilayer. The Extracellular portion of the chain corresponds to 35 to 175 (VQHTQGERRQ…TEQSIKKHLR (141 aa)). A helical transmembrane segment spans residues 176–196 (NLSVIAVLVLLLGFIGAAVLA). Residues 197 to 542 (KSIRKDTLGL…PFDSHRDCGG (346 aa)) lie on the Cytoplasmic side of the membrane. A PAS domain is found at 216 to 279 (RERNAMLFAI…MSVLEKGEML (64 aa)). Positions 336-528 (AQTHEFSNKL…VFTVFIPKEK (193 aa)) constitute a Histidine kinase domain. His-339 carries the phosphohistidine; by autocatalysis modification.

It localises to the cell membrane. The catalysed reaction is ATP + protein L-histidine = ADP + protein N-phospho-L-histidine.. Member of the two-component regulatory system CitT/CitS. Regulates the expression of the citM-yflN operon. Functions probably as a membrane-associated protein kinase that phosphorylates CitT in response to environmental citrate or Mg(2+)-citrate complex. The chain is Sensor protein CitS (citS) from Bacillus subtilis (strain 168).